A 553-amino-acid chain; its full sequence is Glutamine--tRNA ligase (553 aa).

Positions 34–44 (PEPNGYLHIGH) match the 'HIGH' region motif. ATP contacts are provided by residues 35 to 37 (EPN) and 41 to 47 (HIGHAKS). The L-glutamine site is built by Asp-68 and Tyr-213. Residues Thr-232 and 262–263 (RL) each bind ATP. A 'KMSKS' region motif is present at residues 269–273 (LTSKR).

The protein belongs to the class-I aminoacyl-tRNA synthetase family. As to quaternary structure, monomer.

The protein localises to the cytoplasm. It carries out the reaction tRNA(Gln) + L-glutamine + ATP = L-glutaminyl-tRNA(Gln) + AMP + diphosphate. The sequence is that of Glutamine--tRNA ligase from Psychromonas ingrahamii (strain DSM 17664 / CCUG 51855 / 37).